Here is a 324-residue protein sequence, read N- to C-terminus: Methionyl-tRNA formyltransferase (324 aa).

109–112 (SILP) is a (6S)-5,6,7,8-tetrahydrofolate binding site.

Belongs to the Fmt family.

The enzyme catalyses L-methionyl-tRNA(fMet) + (6R)-10-formyltetrahydrofolate = N-formyl-L-methionyl-tRNA(fMet) + (6S)-5,6,7,8-tetrahydrofolate + H(+). Its function is as follows. Attaches a formyl group to the free amino group of methionyl-tRNA(fMet). The formyl group appears to play a dual role in the initiator identity of N-formylmethionyl-tRNA by promoting its recognition by IF2 and preventing the misappropriation of this tRNA by the elongation apparatus. This is Methionyl-tRNA formyltransferase from Acidothermus cellulolyticus (strain ATCC 43068 / DSM 8971 / 11B).